A 607-amino-acid chain; its full sequence is Guanine nucleotide-binding protein-like 1 (607 aa).

The span at 1–14 shows a compositional bias: basic residues; sequence MPRKKPFSVKQKKK. A disordered region spans residues 1–81; that stretch reads MPRKKPFSVK…GPRGYDPNRY (81 aa). Positions 15 to 26 are enriched in basic and acidic residues; the sequence is QLQDKRERKRGL. A phosphoserine mark is found at S32, S33, and S34. A phosphothreonine mark is found at T48 and T50. Residues S51 and S68 each carry the phosphoserine modification. In terms of domain architecture, CP-type G spans 178–418; it reads WRQLWRVLEM…LCDCPGLIFP (241 aa). 225-228 provides a ligand contact to GTP; sequence NKVD. S324 is modified (phosphoserine). GTP-binding positions include 367 to 374 and 411 to 415; these read GFPNVGKS and DCPGL. A disordered region spans residues 544–607; sequence GRVGPAGDEE…PYALLGEDEC (64 aa). Acidic residues predominate over residues 550 to 585; sequence GDEEEEEEEELSSSCEEEGEEDRDADEEGEGDEDTP. 3 positions are modified to phosphoserine: S561, S562, and S563.

The protein belongs to the TRAFAC class YlqF/YawG GTPase family.

Functionally, possible regulatory or functional link with the histocompatibility cluster. The protein is Guanine nucleotide-binding protein-like 1 (Gnl1) of Mus musculus (Mouse).